The sequence spans 429 residues: Ribosomal protein uS12 methylthiotransferase RimO (429 aa).

The MTTase N-terminal domain maps to 2 to 118 (HNIFLLSLGC…VLRAIGAEYR (117 aa)). C11, C47, C81, C142, C146, and C149 together coordinate [4Fe-4S] cluster. The Radical SAM core domain occupies 128 to 357 (LTPPHYAFLK…MELQETISQE (230 aa)). The TRAM domain occupies 360-427 (REFEGNEIVV…PYDLEGEVIG (68 aa)).

This sequence belongs to the methylthiotransferase family. RimO subfamily. [4Fe-4S] cluster serves as cofactor.

It localises to the cytoplasm. It carries out the reaction L-aspartate(89)-[ribosomal protein uS12]-hydrogen + (sulfur carrier)-SH + AH2 + 2 S-adenosyl-L-methionine = 3-methylsulfanyl-L-aspartate(89)-[ribosomal protein uS12]-hydrogen + (sulfur carrier)-H + 5'-deoxyadenosine + L-methionine + A + S-adenosyl-L-homocysteine + 2 H(+). Catalyzes the methylthiolation of an aspartic acid residue of ribosomal protein uS12. The chain is Ribosomal protein uS12 methylthiotransferase RimO from Chlorobium limicola (strain DSM 245 / NBRC 103803 / 6330).